The sequence spans 384 residues: F-box only protein 5 (384 aa).

The interval 25-67 (EVKGHKVSPRKTGALSLRSPAATNVSTPLESRSKGPHNKENYQ) is disordered. Residues 45 to 54 (AATNVSTPLE) show a composition bias toward polar residues. Residues 55 to 67 (SRSKGPHNKENYQ) show a composition bias toward basic and acidic residues. In terms of domain architecture, F-box spans 187–234 (CKLMRKDMRHILARILGLLGDCDLISCTKVSRTWRKIICQDQLALQRW). The ZBR-type zinc-finger motif lies at 311-359 (SLRRCSRCSSPARFDAVMQRAVCTRISCAFEFCTLCQSAFHDSTPCRNT). Positions 315, 318, 333, 338, 343, 346, 351, and 356 each coordinate Zn(2+).

Part of a SCF (SKP1-cullin-F-box) protein ligase complex.

It is found in the nucleus. The protein localises to the cytoplasm. It functions in the pathway protein modification; protein ubiquitination. During embryonic development, regulates the integrity of the genome and therefore the cell cycle progression by preventing rereplication through an APC-Cdh1-dependent mechanism. This Danio rerio (Zebrafish) protein is F-box only protein 5.